We begin with the raw amino-acid sequence, 736 residues long: Subtilisin-like protease SBT1.9 (736 aa).

Residues 1-20 (MGMTVVIILVFSFFVAIVTA) form the signal peptide. The propeptide at 21–101 (ETSPYIIHMD…FTKDLPVKLH (81 aa)) is activation peptide. The Inhibitor I9 domain maps to 25–101 (YIIHMDLSAK…FTKDLPVKLH (77 aa)). Positions 103 to 582 (TFSPKFIGLN…AGHVSTNKVL (480 aa)) constitute a Peptidase S8 domain. Residue Asn-112 is glycosylated (N-linked (GlcNAc...) asparagine). Catalysis depends on Asp-133, which acts as the Charge relay system. An N-linked (GlcNAc...) asparagine glycan is attached at Asn-162. His-205 serves as the catalytic Charge relay system. N-linked (GlcNAc...) asparagine glycans are attached at residues Asn-220, Asn-381, and Asn-453. The region spanning 367–441 (VQFPVTYIES…VAFIGSKHRE (75 aa)) is the PA domain. The active-site Charge relay system is Ser-529. The N-linked (GlcNAc...) asparagine glycan is linked to Asn-617.

Belongs to the peptidase S8 family.

It is found in the secreted. The protein is Subtilisin-like protease SBT1.9 of Arabidopsis thaliana (Mouse-ear cress).